The primary structure comprises 721 residues: Catalase-peroxidase 1 (721 aa).

A cross-link (tryptophyl-tyrosyl-methioninium (Trp-Tyr) (with M-249)) is located at residues W98–Y223. Residue H99 is the Proton acceptor of the active site. Positions Y223 to M249 form a cross-link, tryptophyl-tyrosyl-methioninium (Tyr-Met) (with W-98). H264 is a binding site for heme b.

Belongs to the peroxidase family. Peroxidase/catalase subfamily. Homodimer or homotetramer. Heme b is required as a cofactor. Post-translationally, formation of the three residue Trp-Tyr-Met cross-link is important for the catalase, but not the peroxidase activity of the enzyme.

It catalyses the reaction H2O2 + AH2 = A + 2 H2O. It carries out the reaction 2 H2O2 = O2 + 2 H2O. Bifunctional enzyme with both catalase and broad-spectrum peroxidase activity. The protein is Catalase-peroxidase 1 of Legionella pneumophila subsp. pneumophila (strain Philadelphia 1 / ATCC 33152 / DSM 7513).